Reading from the N-terminus, the 474-residue chain is Vasculin-like protein 1 (474 aa).

A disordered region spans residues 17-42 (QSAKSPTATFEKHGEHLPRGEGRFGV). A compositionally biased stretch (basic and acidic residues) spans 26 to 38 (FEKHGEHLPRGEG). S49 and S76 each carry phosphoserine. The tract at residues 91–191 (GNPSGWHSSS…VWENPPSAKQ (101 aa)) is disordered. The span at 116 to 128 (NHRHWNGSFHSRK) shows a compositional bias: basic residues. The span at 136-154 (PPMEIREEKKEDKVEKLQF) shows a compositional bias: basic and acidic residues. S202 is subject to Phosphoserine. The tract at residues 238–371 (LVPKPVPPPS…EEGCHQNGLA (134 aa)) is disordered. Residues 262–277 (GSLSSSRESAFTSPIS) are compositionally biased toward polar residues. Residues 291–312 (SSPKESPSSTTPPIEISSSRLT) are compositionally biased toward low complexity. Phosphoserine is present on S292. A Phosphothreonine modification is found at T301. 2 stretches are compositionally biased toward basic and acidic residues: residues 317 to 346 (RTTD…CDKL) and 356 to 365 (EPKENGEEGC). S382 carries the post-translational modification Phosphoserine. The segment at 453–474 (AEFEDSDTETSSSETSDDDAWK) is disordered.

The protein belongs to the vasculin family.

Its subcellular location is the nucleus. Functionally, possible transcription factor. This Homo sapiens (Human) protein is Vasculin-like protein 1 (GPBP1L1).